We begin with the raw amino-acid sequence, 83 residues long: Omega-agatoxin-Aa4b (83 aa).

The first 20 residues, 1-20, serve as a signal peptide directing secretion; sequence MKLCMTLLITAIAVVTFVVA. The propeptide occupies 21–35; the sequence is TQEESAEFNEVEESR. Cystine bridges form between cysteine 39–cysteine 55, cysteine 47–cysteine 60, cysteine 54–cysteine 71, and cysteine 62–cysteine 69. Serine 81 carries the post-translational modification D-serine (Ser).

This sequence belongs to the neurotoxin 02 (plectoxin) family. 03 (omega-agtx) subfamily. In terms of processing, the toxin with D-Ser (named omega-aga IVC) is 80-90 fold more potent than that with L-Ser (omega-aga IVB) against Cav2.1/CACNA1A (P-type) channels in rat cerebellar Purkinje neurons and is more resistant to proteases. The epimerization is done by the venom peptide isomerase heterodimer. Expressed by the venom gland.

It is found in the secreted. Antagonist of voltage-gated Cav2.1/CACNA1A (P-type) calcium channels. Paralyzes insect by blocking neuromuscular transmission. This is Omega-agatoxin-Aa4b from Agelenopsis aperta (North American funnel-web spider).